Reading from the N-terminus, the 290-residue chain is Manganese efflux system protein MneS (290 aa).

Transmembrane regions (helical) follow at residues 15 to 35, 39 to 61, 82 to 102, 113 to 133, 159 to 179, and 181 to 201; these read LVSI…GYLF, ALTA…LIGL, IASL…LFSA, TPDM…LIVY, AFVS…LAWI, and TVTA…IFKE.

It belongs to the cation diffusion facilitator (CDF) transporter (TC 2.A.4) family.

It localises to the cell membrane. Functionally, secondary manganese efflux system. May prevent manganese intoxication. The polypeptide is Manganese efflux system protein MneS (Bacillus subtilis (strain 168)).